Here is a 766-residue protein sequence, read N- to C-terminus: Phosphoribosylformylglycinamidine synthase subunit PurL (766 aa).

Residue His46 is part of the active site. Tyr49 and Lys88 together coordinate ATP. Glu90 lines the Mg(2+) pocket. Residues 91–94 (SHNH) and Arg113 contribute to the substrate site. His92 functions as the Proton acceptor in the catalytic mechanism. Position 114 (Asp114) interacts with Mg(2+). Gln237 serves as a coordination point for substrate. Asp265 contacts Mg(2+). 309–311 (ESQ) is a substrate binding site. Residues Asp520 and Gly557 each contribute to the ATP site. Asn558 is a Mg(2+) binding site. Ser560 contacts substrate.

This sequence belongs to the FGAMS family. Monomer. Part of the FGAM synthase complex composed of 1 PurL, 1 PurQ and 2 PurS subunits.

It is found in the cytoplasm. It carries out the reaction N(2)-formyl-N(1)-(5-phospho-beta-D-ribosyl)glycinamide + L-glutamine + ATP + H2O = 2-formamido-N(1)-(5-O-phospho-beta-D-ribosyl)acetamidine + L-glutamate + ADP + phosphate + H(+). It functions in the pathway purine metabolism; IMP biosynthesis via de novo pathway; 5-amino-1-(5-phospho-D-ribosyl)imidazole from N(2)-formyl-N(1)-(5-phospho-D-ribosyl)glycinamide: step 1/2. Part of the phosphoribosylformylglycinamidine synthase complex involved in the purines biosynthetic pathway. Catalyzes the ATP-dependent conversion of formylglycinamide ribonucleotide (FGAR) and glutamine to yield formylglycinamidine ribonucleotide (FGAM) and glutamate. The FGAM synthase complex is composed of three subunits. PurQ produces an ammonia molecule by converting glutamine to glutamate. PurL transfers the ammonia molecule to FGAR to form FGAM in an ATP-dependent manner. PurS interacts with PurQ and PurL and is thought to assist in the transfer of the ammonia molecule from PurQ to PurL. In Synechococcus sp. (strain JA-3-3Ab) (Cyanobacteria bacterium Yellowstone A-Prime), this protein is Phosphoribosylformylglycinamidine synthase subunit PurL.